Consider the following 366-residue polypeptide: tRNA/tmRNA (uracil-C(5))-methyltransferase (366 aa).

Residues glutamine 190, tyrosine 218, asparagine 223, glutamate 239, and aspartate 299 each coordinate S-adenosyl-L-methionine. Cysteine 324 acts as the Nucleophile in catalysis. Glutamate 358 acts as the Proton acceptor in catalysis.

It belongs to the class I-like SAM-binding methyltransferase superfamily. RNA M5U methyltransferase family. TrmA subfamily.

It carries out the reaction uridine(54) in tRNA + S-adenosyl-L-methionine = 5-methyluridine(54) in tRNA + S-adenosyl-L-homocysteine + H(+). It catalyses the reaction uridine(341) in tmRNA + S-adenosyl-L-methionine = 5-methyluridine(341) in tmRNA + S-adenosyl-L-homocysteine + H(+). Functionally, dual-specificity methyltransferase that catalyzes the formation of 5-methyluridine at position 54 (m5U54) in all tRNAs, and that of position 341 (m5U341) in tmRNA (transfer-mRNA). The polypeptide is tRNA/tmRNA (uracil-C(5))-methyltransferase (Escherichia coli O127:H6 (strain E2348/69 / EPEC)).